Consider the following 367-residue polypeptide: GMP synthase [glutamine-hydrolyzing] subunit B (367 aa).

The 189-residue stretch at 2 to 190 (FDPASFVKEI…LKLPKEISER (189 aa)) folds into the GMPS ATP-PPase domain. 29 to 35 (SGGVDST) is a binding site for ATP.

In terms of assembly, heterodimer composed of a glutamine amidotransferase subunit (A) and a GMP-binding subunit (B).

The enzyme catalyses XMP + L-glutamine + ATP + H2O = GMP + L-glutamate + AMP + diphosphate + 2 H(+). It functions in the pathway purine metabolism; GMP biosynthesis; GMP from XMP (L-Gln route): step 1/1. In terms of biological role, catalyzes the synthesis of GMP from XMP. The chain is GMP synthase [glutamine-hydrolyzing] subunit B from Saccharolobus islandicus (strain M.16.27) (Sulfolobus islandicus).